Reading from the N-terminus, the 285-residue chain is Chromatin modification-related protein YNG2 (285 aa).

Positions 19-54 (LEVKHLLQELKNKDVQLQEARKRYQTKDNQIHKFIR) form a coiled coil. The segment covering 138-165 (NGLSDNLSGTTTPRGHSASTPVADNAAN) has biased composition (polar residues). Residues 138 to 218 (NGLSDNLSGT…SRPNEGPGNN (81 aa)) form a disordered region. The segment covering 193 to 207 (MKSEDFEDKKYDNDS) has biased composition (basic and acidic residues). The segment at 225–276 (NLYCFCQRVSFGEMIGCDNDDCKFEWFHWSCVGITAPPKDDEIWYCPDCAPK) adopts a PHD-type zinc-finger fold. Positions 228, 230, 241, 246, 252, 255, 270, and 273 each coordinate Zn(2+).

Belongs to the ING family. In terms of assembly, interacts with H3K4me3 and to a lesser extent with H3K4me2. Component of the NuA4 histone acetyltransferase complex.

Its subcellular location is the nucleus. Functionally, component of the NuA4 histone acetyltransferase complex which is involved in transcriptional activation of selected genes principally by acetylation of nucleosomal histone H4 and H2A. The NuA4 complex is also involved in DNA repair. Involved in cell cycle progression and meiosis. This chain is Chromatin modification-related protein YNG2 (YNG2), found in Debaryomyces hansenii (strain ATCC 36239 / CBS 767 / BCRC 21394 / JCM 1990 / NBRC 0083 / IGC 2968) (Yeast).